Consider the following 165-residue polypeptide: MTDEALLTQVLMPYKDHCKYLRSAVVTETDGRASARCEFEIPESCYIDDTGHLNSVEVNICYNQMMYYLVAKSVKEGLGTGFESWTLEDFWKHQLPDILIARFSSNFRRPVNPRVFSGEMEFRSVTRRAPAGGSPFVHADTAFRYWDADAGRCDGEATLAFVNVP.

The protein belongs to the FcoT family.

The enzyme catalyses a (3R)-3-[(carboxymethyl)amino]fatty acid + holo-[ACP] + H(+) = a (2E)-enoyl-[ACP] + glycine + H2O. It carries out the reaction (3R)-3-[(carboxymethyl)amino]butanoate + holo-[ACP] + H(+) = (2E)-butenoyl-[ACP] + glycine + H2O. Functionally, involved in the biosynthesis of a unique class of isonitrile lipopeptides (INLPs). Catalyzes a Michael addition of glycine to the beta-position of an alpha,beta-unsaturated fatty acyl-[ACP], producing a (3R)-3-[(carboxymethyl)amino]fatty acid. Acts on the (2E)-butenoyl moiety loaded on the acyl-carrier protein ScoB, forming the product (3R)-3-[(carboxymethyl)amino]butanoate released from ScoB. The protein is (2E)-enoyl-[ACP] glycyltransferase of Streptomyces coeruleorubidus.